Consider the following 376-residue polypeptide: Succinyl-diaminopimelate desuccinylase (376 aa).

His67 serves as a coordination point for Zn(2+). The active site involves Asp69. A Zn(2+)-binding site is contributed by Asp100. Glu134 (proton acceptor) is an active-site residue. Zn(2+)-binding residues include Glu135, Glu163, and His349.

This sequence belongs to the peptidase M20A family. DapE subfamily. In terms of assembly, homodimer. The cofactor is Zn(2+). It depends on Co(2+) as a cofactor.

It catalyses the reaction N-succinyl-(2S,6S)-2,6-diaminopimelate + H2O = (2S,6S)-2,6-diaminopimelate + succinate. Its pathway is amino-acid biosynthesis; L-lysine biosynthesis via DAP pathway; LL-2,6-diaminopimelate from (S)-tetrahydrodipicolinate (succinylase route): step 3/3. Its function is as follows. Catalyzes the hydrolysis of N-succinyl-L,L-diaminopimelic acid (SDAP), forming succinate and LL-2,6-diaminopimelate (DAP), an intermediate involved in the bacterial biosynthesis of lysine and meso-diaminopimelic acid, an essential component of bacterial cell walls. This Pseudoalteromonas atlantica (strain T6c / ATCC BAA-1087) protein is Succinyl-diaminopimelate desuccinylase.